Reading from the N-terminus, the 113-residue chain is Large ribosomal subunit protein uL22 (113 aa).

Belongs to the universal ribosomal protein uL22 family. In terms of assembly, part of the 50S ribosomal subunit.

Functionally, this protein binds specifically to 23S rRNA; its binding is stimulated by other ribosomal proteins, e.g. L4, L17, and L20. It is important during the early stages of 50S assembly. It makes multiple contacts with different domains of the 23S rRNA in the assembled 50S subunit and ribosome. Its function is as follows. The globular domain of the protein is located near the polypeptide exit tunnel on the outside of the subunit, while an extended beta-hairpin is found that lines the wall of the exit tunnel in the center of the 70S ribosome. The sequence is that of Large ribosomal subunit protein uL22 from Geobacillus stearothermophilus (Bacillus stearothermophilus).